A 64-amino-acid polypeptide reads, in one-letter code: Lantipeptide Flvbeta.d (64 aa).

Positions 1–31 (MDNNTEKFNELAAIADESELNEMLDENITGA) are cleaved as a propeptide — cleaved by FlvT. Residues 33 to 37 (STIQC) constitute a cross-link (lanthionine (Ser-Cys); by FlvM2). Thr-34 and Thr-41 each carry 2,3-didehydrobutyrine; by FlvM2. Cross-links (beta-methyllanthionine (Thr-Cys); by FlvM2) lie at residues 44–52 (TILSVVFDC), 55–58 (TSAC), and 59–62 (TPPC). A cross-link (lanthionine (Ser-Cys); by FlvM2) is located at residues 47 to 53 (SVVFDCC).

In terms of processing, contains LL-lanthionine, DL-lanthionine, and DL-beta-methyllanthionine, when coepressed in E.coli with the flavecin synthetase FlvM2.

It is found in the secreted. Lanthionine-containing peptide that does probably not show antibacterial activity, since its analog [+2]Flvbeta.d does not show antibacterial activity against M.luteus. Also does not show antibiotic activity when tested with [Del2]Flvalpha.a, an analog of Flvalpha.a, which is encoded by the same operon than Flvbeta.d. The bactericidal activity of lantibiotics is based on depolarization of energized bacterial cytoplasmic membranes, initiated by the formation of aqueous transmembrane pores. This Ruminococcus flavefaciens protein is Lantipeptide Flvbeta.d.